A 636-amino-acid chain; its full sequence is DNA-directed RNA polymerase III subunit RPC3 (636 aa).

Positions 366 to 385 (SMQRRSQERSTHQGQSHKRL) are disordered. Residues 563-584 (LAWNIANSIHKTEILKEENFTL) form a leucine-zipper region.

This sequence belongs to the RNA polymerase beta chain family. In terms of assembly, component of the RNA polymerase III (Pol III) complex consisting of 17 subunits.

The protein resides in the nucleus. Its function is as follows. DNA-dependent RNA polymerase catalyzes the transcription of DNA into RNA using the four ribonucleoside triphosphates as substrates. Specific core component of RNA polymerase III which synthesizes small RNAs, such as 5S rRNA and tRNAs. This Eremothecium gossypii (strain ATCC 10895 / CBS 109.51 / FGSC 9923 / NRRL Y-1056) (Yeast) protein is DNA-directed RNA polymerase III subunit RPC3 (RPC82).